Reading from the N-terminus, the 332-residue chain is Diaminopimelate epimerase (332 aa).

N13 and N73 together coordinate substrate. The active-site Proton donor is the C82. Substrate contacts are provided by residues 83–84, N172, N209, and 227–228; these read GN and ER. C236 acts as the Proton acceptor in catalysis. Position 237 to 238 (237 to 238) interacts with substrate; it reads GT.

It belongs to the diaminopimelate epimerase family. In terms of assembly, homodimer.

It is found in the cytoplasm. The enzyme catalyses (2S,6S)-2,6-diaminopimelate = meso-2,6-diaminopimelate. Its pathway is amino-acid biosynthesis; L-lysine biosynthesis via DAP pathway; DL-2,6-diaminopimelate from LL-2,6-diaminopimelate: step 1/1. Its function is as follows. Catalyzes the stereoinversion of LL-2,6-diaminopimelate (L,L-DAP) to meso-diaminopimelate (meso-DAP), a precursor of L-lysine and an essential component of the bacterial peptidoglycan. The chain is Diaminopimelate epimerase from Lactiplantibacillus plantarum (strain ATCC BAA-793 / NCIMB 8826 / WCFS1) (Lactobacillus plantarum).